Here is a 258-residue protein sequence, read N- to C-terminus: MVATTITYEQPLNEPMRICLRLEHLFRQLHEHIREPAPAASHLAMLALLKALNVIDRPDLKTKLTQTLTQQTSTLLQLKHSPEVDNHKLQGLLDTLDRYVTHLHQTTRKIGEPLRENAFLTQIRSHLYNPAGPCNFTTPAYALWLQQPSENRINDLQNWAKEFEPLINIVNAILQIIRESTSPQNIVARQGFYQQMLNATSPCQLIQLILPIEKNIYPEICAGKHRLVIRFLPLDVNNNENTKQIAEEISFKLNCCRI.

Belongs to the ZapD family. In terms of assembly, interacts with FtsZ.

It is found in the cytoplasm. Functionally, cell division factor that enhances FtsZ-ring assembly. Directly interacts with FtsZ and promotes bundling of FtsZ protofilaments, with a reduction in FtsZ GTPase activity. This chain is Cell division protein ZapD, found in Coxiella burnetii (strain RSA 331 / Henzerling II).